Here is a 195-residue protein sequence, read N- to C-terminus: Adenylate kinase (195 aa).

8–16 (GIPGVGKTT) is a binding site for ATP.

Belongs to the archaeal adenylate kinase family. In terms of assembly, homotrimer.

The protein localises to the cytoplasm. It carries out the reaction AMP + ATP = 2 ADP. This is Adenylate kinase (adkA) from Saccharolobus solfataricus (strain ATCC 35092 / DSM 1617 / JCM 11322 / P2) (Sulfolobus solfataricus).